The sequence spans 414 residues: Enterobactin exporter EntS (414 aa).

Over 1 to 21 the chain is Cytoplasmic; that stretch reads MNRQSWLLNLSLLKTHPAFRA. The chain crosses the membrane as a helical span at residues 22 to 42; sequence VFLARFISIVSLGLLGVAVPV. Residues 43–55 are Periplasmic-facing; the sequence is QIQMMTHSTWQVG. Residues 56-76 form a helical membrane-spanning segment; that stretch reads LSVTLTGGAMFIGLMVGGVLA. At 77–83 the chain is on the cytoplasmic side; the sequence is DRYERKK. Residues 84-104 traverse the membrane as a helical segment; the sequence is VILLARGTCGIGFIGLCVNAL. At 105–109 the chain is on the periplasmic side; it reads LPEPS. The chain crosses the membrane as a helical span at residues 110 to 130; it reads LLAIYLLGLWDGFFASLGVTA. Over 131-156 the chain is Cytoplasmic; sequence LLAATPALVGRENLMQAGAITMLTVR. The chain crosses the membrane as a helical span at residues 157–177; the sequence is LGSVISPMLGGILLASGGVAW. Residue Asn-178 is a topological domain, periplasmic. A helical membrane pass occupies residues 179–199; the sequence is YGLAAAGTFITLLPLLTLPRL. Over 200-218 the chain is Cytoplasmic; the sequence is PVPPQPRENPFLALLAAFR. Residues 219-239 traverse the membrane as a helical segment; sequence FLLACPLIGGIALLGGLVTMA. Topologically, residues 240-256 are periplasmic; the sequence is SAVRVLYPALAMSWQMS. Residues 257-277 form a helical membrane-spanning segment; it reads AAQIGLLYAAIPLGAAIGALT. Residues 278 to 287 lie on the Cytoplasmic side of the membrane; sequence SGQLAHSVRP. A helical membrane pass occupies residues 288-307; the sequence is GLIMLVSTVGSFLAVGLFAI. Over 308 to 313 the chain is Periplasmic; sequence MPVWIA. A helical transmembrane segment spans residues 314–336; sequence GVICLALFGWLSAISSLLQYTLL. Topologically, residues 337-356 are cytoplasmic; the sequence is QTQTPENMLGRMNGLWTAQN. Residues 357–377 form a helical membrane-spanning segment; sequence VTGDAIGAALLGGLGAMMTPV. Ala-378 is a topological domain (periplasmic). Residues 379-399 traverse the membrane as a helical segment; that stretch reads SASVSGFGLVIIGLLLLLVLG. The Cytoplasmic portion of the chain corresponds to 400–414; the sequence is ELRRFRQTSPVSDAG.

Belongs to the major facilitator superfamily. EntS (TC 2.A.1.38) family.

Its subcellular location is the cell inner membrane. In terms of biological role, component of an export pathway for enterobactin. In Salmonella paratyphi A (strain ATCC 9150 / SARB42), this protein is Enterobactin exporter EntS.